A 459-amino-acid chain; its full sequence is Transcription factor mlcR (459 aa).

Positions 21–53 form a DNA-binding region, zn(2)-C6 fungal-type; sequence CDRCHAQKLKCTGSNANLVRAQCQRCQQAGLRC. Disordered stretches follow at residues 64–84 and 135–170; these read LHKEAAAGTTRATETSQPMTA and DPESFPGGWPQPNTFRDDANSNESSGIPDLGYDFEG. The span at 69–78 shows a compositional bias: low complexity; sequence AAGTTRATET.

It is found in the nucleus. Functionally, transcription factor that regulates the gene cluster that mediates the biosynthesis of compactin, also known as mevastatin or ML-236B, and which acts as a potent competitive inhibitor of HMG-CoA reductase. Binds to the consensus-binding motif 5'-WCGG-N(6)-TCGG-3' of target genes. The chain is Transcription factor mlcR from Penicillium citrinum.